Here is a 692-residue protein sequence, read N- to C-terminus: MKFTEHLSAHITPEWRKQYIQYEAFKEMLYAAQDQAPSIEVTDEDTVKRYYAKFEEKFFQTCEKELAKINTFYSEKLAEAQRRSATLQNELQSSLDAQRESSVVPGLRQRRKAVFALTHEERVQHRNIKDLKLAFSEFYLSLILLQNYQNLNFTGFRKILKKHDKILETSRGADWRVAHVEVAPFYTCKKINQLISETETVVTNELESGDRQKAMKRLRVPPLGAAQPAPAWTTFRVGLYCGIFMVVNLAVVMAGYHFLQGKNVWPMVRIYRGGFLLIEFLFLLGINTYGWRQAGVNHVLIFELNPRNNLSHQHLFEIAGFLGILWCFSLFSCIFGLSINLQMHLNPLILYGIMLVFLVNPTKTFYYKSRFWLLKLLFRVFTAPFHKVGFADFWLADQLNSLAIILMDLEFMICFYSFELNWGKSEGLVESAKSVCNSYSYGVRAVVQCIPAWLRFIQCLRRYRDTKRAFPHLVNAGKYSTTFFMVTFAALYSTHKERNHSDAQVFFYLWIVFYFISSCYTLIWDLKMDWGLFDRNAGENTFLREEIVYPQKAYYYCAIIQDVILRFAWTIQISVTSLNLFTDAGDVISTVLAPLEVFRRFVWNFFRLENEHLNNCGEFRAVRDISVAPLNADDQTMLEQMMDQDDGVKNRVKSRIWKRSQSMSLRRPRLSSQSKMKDAKILIDDTDDEANT.

Residues 1–177 (MKFTEHLSAH…ETSRGADWRV (177 aa)) enclose the SPX domain. The Cytoplasmic portion of the chain corresponds to 1 to 238 (MKFTEHLSAH…APAWTTFRVG (238 aa)). Residues 158 to 165 (KILKKHDK) are important for inositol polyphosphate binding. The chain crosses the membrane as a helical span at residues 239-259 (LYCGIFMVVNLAVVMAGYHFL). Residues 260–269 (QGKNVWPMVR) lie on the Extracellular side of the membrane. A helical transmembrane segment spans residues 270–290 (IYRGGFLLIEFLFLLGINTYG). Residues 291-314 (WRQAGVNHVLIFELNPRNNLSHQH) are Cytoplasmic-facing. Residues 315 to 335 (LFEIAGFLGILWCFSLFSCIF) traverse the membrane as a helical segment. The Extracellular segment spans residues 336-338 (GLS). A helical transmembrane segment spans residues 339 to 359 (INLQMHLNPLILYGIMLVFLV). The Cytoplasmic segment spans residues 360 to 375 (NPTKTFYYKSRFWLLK). The helical transmembrane segment at 376-396 (LLFRVFTAPFHKVGFADFWLA) threads the bilayer. The Extracellular portion of the chain corresponds to 397 to 401 (DQLNS). The helical transmembrane segment at 402–422 (LAIILMDLEFMICFYSFELNW) threads the bilayer. The Cytoplasmic portion of the chain corresponds to 423–468 (GKSEGLVESAKSVCNSYSYGVRAVVQCIPAWLRFIQCLRRYRDTKR). One can recognise an EXS domain in the interval 435–639 (VCNSYSYGVR…LNADDQTMLE (205 aa)). The helical transmembrane segment at 469–491 (AFPHLVNAGKYSTTFFMVTFAAL) threads the bilayer. Residues 492 to 503 (YSTHKERNHSDA) are Extracellular-facing. The chain crosses the membrane as a helical span at residues 504–524 (QVFFYLWIVFYFISSCYTLIW). The Cytoplasmic portion of the chain corresponds to 525-692 (DLKMDWGLFD…IDDTDDEANT (168 aa)). Residues 660–674 (SQSMSLRRPRLSSQS) are compositionally biased toward polar residues. Residues 660-692 (SQSMSLRRPRLSSQSKMKDAKILIDDTDDEANT) form a disordered region.

Belongs to the SYG1 (TC 2.A.94) family.

The protein localises to the cell membrane. Plays a role in phosphate homeostasis. Mediates phosphate export from the cell. Binds inositol hexakisphosphate (Ins6P) and similar inositol polyphosphates, such as 5-diphospho-inositol pentakisphosphate (5-InsP7); these are important intracellular signaling molecules. This Xenopus laevis (African clawed frog) protein is Xenotropic and polytropic retrovirus receptor 1 homolog (xpr1).